Reading from the N-terminus, the 145-residue chain is Endoribonuclease YbeY (145 aa).

Zn(2+) contacts are provided by His-109, His-113, and His-119.

Belongs to the endoribonuclease YbeY family. Requires Zn(2+) as cofactor.

The protein resides in the cytoplasm. Single strand-specific metallo-endoribonuclease involved in late-stage 70S ribosome quality control and in maturation of the 3' terminus of the 16S rRNA. This is Endoribonuclease YbeY from Ruthia magnifica subsp. Calyptogena magnifica.